A 490-amino-acid chain; its full sequence is Probable cytosol aminopeptidase (490 aa).

2 residues coordinate Mn(2+): Lys-256 and Asp-261. The active site involves Lys-268. Positions 280, 340, and 342 each coordinate Mn(2+). Arg-344 is a catalytic residue.

It belongs to the peptidase M17 family. Mn(2+) serves as cofactor.

The protein localises to the cytoplasm. It carries out the reaction Release of an N-terminal amino acid, Xaa-|-Yaa-, in which Xaa is preferably Leu, but may be other amino acids including Pro although not Arg or Lys, and Yaa may be Pro. Amino acid amides and methyl esters are also readily hydrolyzed, but rates on arylamides are exceedingly low.. It catalyses the reaction Release of an N-terminal amino acid, preferentially leucine, but not glutamic or aspartic acids.. In terms of biological role, presumably involved in the processing and regular turnover of intracellular proteins. Catalyzes the removal of unsubstituted N-terminal amino acids from various peptides. The protein is Probable cytosol aminopeptidase of Synechococcus sp. (strain CC9902).